Here is a 377-residue protein sequence, read N- to C-terminus: Glutamate 5-kinase (377 aa).

K22 is an ATP binding site. S62, D149, and N161 together coordinate substrate. ATP is bound by residues T181–D182 and T223–K229. Positions R285–E363 constitute a PUA domain.

The protein belongs to the glutamate 5-kinase family.

It is found in the cytoplasm. The enzyme catalyses L-glutamate + ATP = L-glutamyl 5-phosphate + ADP. It functions in the pathway amino-acid biosynthesis; L-proline biosynthesis; L-glutamate 5-semialdehyde from L-glutamate: step 1/2. Functionally, catalyzes the transfer of a phosphate group to glutamate to form L-glutamate 5-phosphate. This Bifidobacterium animalis subsp. lactis (strain AD011) protein is Glutamate 5-kinase.